The sequence spans 855 residues: DNA polymerase (855 aa).

The region spanning 107-332 is the 3'-5' exonuclease domain; it reads KPEMKPVFDA…LHNFFLPKIE (226 aa). A polymerase region spans residues 333 to 833; it reads KNEKLCSLYY…MDKEHPDHSK (501 aa).

The protein belongs to the DNA polymerase type-A family. As to quaternary structure, single-chain monomer with multiple functions.

The enzyme catalyses DNA(n) + a 2'-deoxyribonucleoside 5'-triphosphate = DNA(n+1) + diphosphate. Replicates the viral genomic DNA. This polymerase possesses two enzymatic activities: DNA synthesis (polymerase) and an exonucleolytic activity that degrades single-stranded DNA in the 3'-5' direction for proofreading purpose. The DNA synthesis very likely occurs by strand displacement. This chain is DNA polymerase, found in Escherichia phage T5 (Enterobacteria phage T5).